The primary structure comprises 405 residues: Dihydrolipoyllysine-residue succinyltransferase component of 2-oxoglutarate dehydrogenase complex (405 aa).

The Lipoyl-binding domain occupies 3–78; sequence SVDILVPDLP…TSRQILGRLR (76 aa). Position 44 is an N6-lipoyllysine (Lys-44). The segment at 75-111 is disordered; sequence GRLREGNSAGKETSAKSEEKASTPAQRQQASLEEQNN. Residues 97–111 show a composition bias toward polar residues; the sequence is TPAQRQQASLEEQNN. One can recognise a Peripheral subunit-binding (PSBD) domain in the interval 113–150; it reads ALSPAIRRLLAEHNLDASAIKGTGVGGRLTREDVEKHL. Residue Lys-148 is modified to N6-acetyllysine. Over residues 153–173 the composition is skewed to low complexity; the sequence is APAKESAPAAAAPAAQPALAA. The interval 153 to 178 is disordered; that stretch reads APAKESAPAAAAPAAQPALAARSEKR. Catalysis depends on residues His-376 and Asp-380.

The protein belongs to the 2-oxoacid dehydrogenase family. In terms of assembly, forms a 24-polypeptide structural core with octahedral symmetry. Part of the 2-oxoglutarate dehydrogenase (OGDH) complex composed of E1 (2-oxoglutarate dehydrogenase), E2 (dihydrolipoamide succinyltransferase) and E3 (dihydrolipoamide dehydrogenase); the complex contains multiple copies of the three enzymatic components (E1, E2 and E3). Interacts with SucA (via N-terminus), the E1 component of OGDH complex. (R)-lipoate is required as a cofactor.

The catalysed reaction is N(6)-[(R)-dihydrolipoyl]-L-lysyl-[protein] + succinyl-CoA = N(6)-[(R)-S(8)-succinyldihydrolipoyl]-L-lysyl-[protein] + CoA. Its pathway is amino-acid degradation; L-lysine degradation via saccharopine pathway; glutaryl-CoA from L-lysine: step 6/6. E2 component of the 2-oxoglutarate dehydrogenase (OGDH) complex which catalyzes the second step in the conversion of 2-oxoglutarate to succinyl-CoA and CO(2). This Escherichia coli O157:H7 protein is Dihydrolipoyllysine-residue succinyltransferase component of 2-oxoglutarate dehydrogenase complex (sucB).